The chain runs to 117 residues: uncharacterized protein (117 aa).

The protein localises to the cytoplasm. Its subcellular location is the nucleus. This is an uncharacterized protein from Saccharomyces cerevisiae (strain ATCC 204508 / S288c) (Baker's yeast).